Here is a 426-residue protein sequence, read N- to C-terminus: Serine hydroxymethyltransferase (426 aa).

(6S)-5,6,7,8-tetrahydrofolate contacts are provided by residues Leu111 and Gly115 to Leu117. Lys220 is subject to N6-(pyridoxal phosphate)lysine.

It belongs to the SHMT family. Homodimer. It depends on pyridoxal 5'-phosphate as a cofactor.

The protein localises to the cytoplasm. It carries out the reaction (6R)-5,10-methylene-5,6,7,8-tetrahydrofolate + glycine + H2O = (6S)-5,6,7,8-tetrahydrofolate + L-serine. It functions in the pathway one-carbon metabolism; tetrahydrofolate interconversion. Its pathway is amino-acid biosynthesis; glycine biosynthesis; glycine from L-serine: step 1/1. In terms of biological role, catalyzes the reversible interconversion of serine and glycine with tetrahydrofolate (THF) serving as the one-carbon carrier. This reaction serves as the major source of one-carbon groups required for the biosynthesis of purines, thymidylate, methionine, and other important biomolecules. Also exhibits THF-independent aldolase activity toward beta-hydroxyamino acids, producing glycine and aldehydes, via a retro-aldol mechanism. This Orientia tsutsugamushi (strain Ikeda) (Rickettsia tsutsugamushi) protein is Serine hydroxymethyltransferase.